We begin with the raw amino-acid sequence, 35 residues long: Photosystem II reaction center protein Psb30 (35 aa).

Residues 7-27 (LIANFAALALITLAGPAVIFI) traverse the membrane as a helical segment.

This sequence belongs to the Psb30/Ycf12 family. As to quaternary structure, PSII is composed of 1 copy each of membrane proteins PsbA, PsbB, PsbC, PsbD, PsbE, PsbF, PsbH, PsbI, PsbJ, PsbK, PsbL, PsbM, PsbT, PsbX, PsbY, PsbZ, Psb30/Ycf12, peripheral proteins of the oxygen-evolving complex and a large number of cofactors. It forms dimeric complexes.

The protein localises to the plastid. The protein resides in the organellar chromatophore thylakoid membrane. In terms of biological role, a core subunit of photosystem II (PSII), probably helps stabilize the reaction center. This chain is Photosystem II reaction center protein Psb30, found in Paulinella chromatophora.